The primary structure comprises 339 residues: Uroporphyrinogen decarboxylase (339 aa).

Substrate is bound by residues 23-27 (RQAGR), Asp72, Tyr147, Thr202, and His315.

Belongs to the uroporphyrinogen decarboxylase family. As to quaternary structure, homodimer.

The protein localises to the cytoplasm. It carries out the reaction uroporphyrinogen III + 4 H(+) = coproporphyrinogen III + 4 CO2. The protein operates within porphyrin-containing compound metabolism; protoporphyrin-IX biosynthesis; coproporphyrinogen-III from 5-aminolevulinate: step 4/4. Catalyzes the decarboxylation of four acetate groups of uroporphyrinogen-III to yield coproporphyrinogen-III. The protein is Uroporphyrinogen decarboxylase of Geobacter sp. (strain M21).